The following is a 393-amino-acid chain: Lipid-A-disaccharide synthase (393 aa).

The protein belongs to the LpxB family.

It catalyses the reaction a lipid X + a UDP-2-N,3-O-bis[(3R)-3-hydroxyacyl]-alpha-D-glucosamine = a lipid A disaccharide + UDP + H(+). Its pathway is bacterial outer membrane biogenesis; LPS lipid A biosynthesis. Condensation of UDP-2,3-diacylglucosamine and 2,3-diacylglucosamine-1-phosphate to form lipid A disaccharide, a precursor of lipid A, a phosphorylated glycolipid that anchors the lipopolysaccharide to the outer membrane of the cell. The polypeptide is Lipid-A-disaccharide synthase (Bordetella pertussis (strain Tohama I / ATCC BAA-589 / NCTC 13251)).